A 90-amino-acid chain; its full sequence is uncharacterized protein (90 aa).

The interval Ala-13 to His-34 is disordered. Residues Tyr-52–Trp-72 traverse the membrane as a helical segment.

It is found in the host membrane. This is an uncharacterized protein from Invertebrate iridescent virus 3 (IIV-3).